Here is a 742-residue protein sequence, read N- to C-terminus: Glucosylceramidase (742 aa).

2 N-linked (GlcNAc...) asparagine glycosylation sites follow: N37 and N160. The active-site Proton donor is the E258. N-linked (GlcNAc...) asparagine glycosylation is present at N388. E492 acts as the Nucleophile in catalysis. N-linked (GlcNAc...) asparagine glycans are attached at residues N552, N560, and N698. A helical membrane pass occupies residues 701–721 (IAQILVAVVILLLGVLVAYYA).

It belongs to the glycosyl hydrolase 5 (cellulase A) family.

It is found in the membrane. It catalyses the reaction a beta-D-glucosyl-(1&lt;-&gt;1')-N-acylsphing-4-enine + H2O = an N-acylsphing-4-enine + D-glucose. In terms of biological role, specifically hydrolyzes the glucosidic linkage in glucosylceramide. May prevent accumulation of aberrent glucosylceramide containing immature ceramide. This is Glucosylceramidase from Cryptococcus neoformans var. grubii serotype A (strain H99 / ATCC 208821 / CBS 10515 / FGSC 9487) (Filobasidiella neoformans var. grubii).